We begin with the raw amino-acid sequence, 100 residues long: Histone-like protein p6 (100 aa).

A DNA-binding region spans residues 1 to 19 (MRKMMQREVTYTTAQLARM).

The protein belongs to the phi29likevirus histone-like protein p6 family. Homodimer. Homomultimer. Binds to double-stranded DNA giving rise to multimeric nucleoprotein complexes. Binding specificity for the viral DNA is based on supercoiling, the viral genome having a negative superhelicity lower than that of plasmid DNA. Interacts with the DNA replication protein p17; this interaction optimizes the binding of protein p6 at the viral DNA ends, thus favoring the initiation of replication.

In terms of biological role, histone-like nucleoprotein that binds to the viral dsDNA and responsible for wrapping and compacting the viral DNA about 4-fold. Forms a nucleoprotein complex in which the DNA adopts a right-handed toroidal conformation winding around a protein core. Binds ito most, if not all, the viral genome, although with different affinity, the highest one corresponding to the genome ends. The formation of the nucleoprotein complex at the genome ends, activates the initiation of viral DNA replication. The binding of p6 would recruit the complex formed by the TP and the DNA polymerase to the origin. Protein p6 also represses early transcription from promoter C2, and, together with protein p4, represses transcription from promoters A2b and A2c and activates late transcription from promoter A3. Protein p6 is therefore involved in the early to late transcription switch. The formation of the nucleoprotein complex at the right end of the phage genome where the early promoter C2 is located affects local topology, which may contribute to the promoter repression. The sequence is that of Histone-like protein p6 (6) from Bacillus phage B103 (Bacteriophage B103).